A 640-amino-acid chain; its full sequence is Putative solute carrier organic anion transporter family member 1B7 (640 aa).

The Extracellular portion of the chain corresponds to 1–16 (MKISTTQIERRFEISS). The chain crosses the membrane as a helical span at residues 17–37 (SLVGLIDGSFEIGNLFVIVFV). Over 38-49 (SYFGSKLHRPKL) the chain is Cytoplasmic. A helical membrane pass occupies residues 50–70 (IGIGCFLMGTGSILMALPHFF). At 71–123 (MGYYRYSKETNIDPSENSTSNLPNCLINQMLSLNRTPSEIIERGCVKESGSHM) the chain is on the extracellular side. The helical transmembrane segment at 124-144 (WIYVFMGNMLRGIGETPIVPL) threads the bilayer. The Cytoplasmic portion of the chain corresponds to 145 to 159 (GISYIDDFAKEGHSS). A helical transmembrane segment spans residues 160–180 (LYLGTVNVMGMTGLVFAFMLG). The Extracellular segment spans residues 181 to 211 (SLFAKMYVDIGYVDLSTIRITPKDSRWVGAW). Residues 212 to 232 (WLGFLVSGIVSIISSIPFFFL) traverse the membrane as a helical segment. Over 233-292 (PLNPNKPQKERKVSLFLHVLKTNDKRNQIANLTNRRKYITKNVTGFFQSLKSILTNPLYV) the chain is Cytoplasmic. S246 carries the post-translational modification Phosphoserine. Residues 293–313 (IFVIFTLLHMSSYIASLTYII) form a helical membrane-spanning segment. Topologically, residues 314 to 329 (KMVEQQYGWSASKTNF) are extracellular. Residues 330–350 (LLGVLALPAVAIGMFSGGYII) form a helical membrane-spanning segment. Topologically, residues 351 to 362 (KKFKLSLVGLAK) are cytoplasmic. The helical transmembrane segment at 363–383 (LAFCSATVHLLSQVLYFFLIC) threads the bilayer. At 384 to 492 (ESKSVAGLTL…CTRKSYVYFV (109 aa)) the chain is on the extracellular side. A Kazal-like domain is found at 406 to 461 (DVPLSYCNSECNCDESQWEPVCGNNGITYLSPCLAGCKSSSGNKEPIVFYNCSCVE). Cystine bridges form between C412–C442, C418–C438, and C427–C459. A helical transmembrane segment spans residues 493–513 (IQVLDAFLCAVGLTSYSVLVI). The Cytoplasmic portion of the chain corresponds to 514–521 (RIVQPELK). A helical membrane pass occupies residues 522 to 542 (ALAIGFHSMIMRSLGGILVPI). The Extracellular portion of the chain corresponds to 543-577 (YFGALIDTTCMKWSTNSCGARGACRIYNSTYLGRA). A helical transmembrane segment spans residues 578-598 (FFGLKVALIFPVLVLLTVFIF). The Cytoplasmic portion of the chain corresponds to 599 to 640 (VVRKKSHGKDTKVLENERQVMDEANLEFLNDSEHFVPSAEEQ). S636 bears the Phosphoserine mark.

This sequence belongs to the organo anion transporter (TC 2.A.60) family.

It localises to the cell membrane. This chain is Putative solute carrier organic anion transporter family member 1B7 (SLCO1B7), found in Homo sapiens (Human).